The following is a 549-amino-acid chain: Chaperonin GroEL (549 aa).

ATP-binding positions include 29–32 (TLGP), K50, 86–90 (DGTTT), G414, 477–479 (NAL), and D493.

The protein belongs to the chaperonin (HSP60) family. Forms a cylinder of 14 subunits composed of two heptameric rings stacked back-to-back. Interacts with the co-chaperonin GroES.

It localises to the cytoplasm. It catalyses the reaction ATP + H2O + a folded polypeptide = ADP + phosphate + an unfolded polypeptide.. Functionally, together with its co-chaperonin GroES, plays an essential role in assisting protein folding. The GroEL-GroES system forms a nano-cage that allows encapsulation of the non-native substrate proteins and provides a physical environment optimized to promote and accelerate protein folding. The polypeptide is Chaperonin GroEL (Leptospira biflexa serovar Patoc (strain Patoc 1 / Ames)).